Here is a 460-residue protein sequence, read N- to C-terminus: Cell death abnormality protein 8 (460 aa).

Over 1–45 (MYLKKHESKLLLIPKNEDKEDAGIIAVLTDRVPSVLIVRWFDLFC) the chain is Cytoplasmic. A helical transmembrane segment spans residues 46 to 66 (FGFAMCSYVLDFFSDIGIAIF). The Extracellular portion of the chain corresponds to 67 to 77 (HFWAGRHLSGA). The chain crosses the membrane as a helical span at residues 78–98 (LVLTFALIPSVIINIISMVWM). The Cytoplasmic segment spans residues 99–123 (LDDEMHWKRRAHPRRTGTFELNQKR). Residues 124-144 (FISLGKMITLCIFQMGPLFWY) traverse the membrane as a helical segment. Over 145–219 (YKALYYGWMF…YYISGKYPYW (75 aa)) the chain is Extracellular. A helical transmembrane segment spans residues 220-240 (LYFQAASLTLSIISISWSVVV). The Cytoplasmic segment spans residues 241–274 (QNRSLRMTRDDKVNIWPHEAVLQFCWRFLTILAR). A helical transmembrane segment spans residues 275 to 295 (IITLVAFVLLFGIYVVFLIFG). The Extracellular portion of the chain corresponds to 296–320 (HLIVTLVHVIFLQALHIEACTHIEK). Residues 321–341 (LLLLINAMIHLFTPFNMAEGN) form a helical membrane-spanning segment. Topologically, residues 342–353 (TRYRYLVAYTVE) are cytoplasmic. Residues 354–374 (FIEMMIIFLLLPTPLDAFPLI) form a helical membrane-spanning segment. The Extracellular portion of the chain corresponds to 375-378 (EKIR). The chain crosses the membrane as a helical span at residues 379–399 (IGVPATFFIGIFIMLIYYKFF). The Cytoplasmic portion of the chain corresponds to 400 to 460 (HPNRRQDLEA…SLLEEDECHN (61 aa)).

It belongs to the XK family. In terms of processing, cleavage by ced-3 activates ced-8 function in promoting phosphatidylserine exposure at the surface of apoptotic cells.

The protein localises to the cell membrane. In terms of biological role, acts downstream of ced-9 and caspase ced-3 to promote phosphatidylserine exposure on apoptotic cell surface, possibly by mediating phospholipid scrambling. Phosphatidylserine is a specific marker only present at the surface of apoptotic cells and acts as a specific signal for engulfment. Regulates apoptosis kinetics during embryonic development. Not required for engulfment of germ cell corpses. In Caenorhabditis briggsae, this protein is Cell death abnormality protein 8.